A 421-amino-acid polypeptide reads, in one-letter code: Gamma-glutamyl phosphate reductase (421 aa).

This sequence belongs to the gamma-glutamyl phosphate reductase family.

It localises to the cytoplasm. It carries out the reaction L-glutamate 5-semialdehyde + phosphate + NADP(+) = L-glutamyl 5-phosphate + NADPH + H(+). The protein operates within amino-acid biosynthesis; L-proline biosynthesis; L-glutamate 5-semialdehyde from L-glutamate: step 2/2. Functionally, catalyzes the NADPH-dependent reduction of L-glutamate 5-phosphate into L-glutamate 5-semialdehyde and phosphate. The product spontaneously undergoes cyclization to form 1-pyrroline-5-carboxylate. The chain is Gamma-glutamyl phosphate reductase from Pseudomonas savastanoi pv. phaseolicola (strain 1448A / Race 6) (Pseudomonas syringae pv. phaseolicola (strain 1448A / Race 6)).